The sequence spans 244 residues: Phosphoadenosine 5'-phosphosulfate reductase (244 aa).

The active-site Nucleophile; cysteine thiosulfonate intermediate is the C239.

The protein belongs to the PAPS reductase family. CysH subfamily.

It localises to the cytoplasm. It catalyses the reaction [thioredoxin]-disulfide + sulfite + adenosine 3',5'-bisphosphate + 2 H(+) = [thioredoxin]-dithiol + 3'-phosphoadenylyl sulfate. Its pathway is sulfur metabolism; hydrogen sulfide biosynthesis; sulfite from sulfate: step 3/3. Functionally, catalyzes the formation of sulfite from phosphoadenosine 5'-phosphosulfate (PAPS) using thioredoxin as an electron donor. The sequence is that of Phosphoadenosine 5'-phosphosulfate reductase from Salmonella newport (strain SL254).